The primary structure comprises 328 residues: uncharacterized protein (328 aa).

Coiled-coil stretches lie at residues 67-190 (FKEQ…VLEE) and 223-251 (MAQR…DNMM).

This is an uncharacterized protein from Mus musculus (Mouse).